The sequence spans 495 residues: Aspartyl/glutamyl-tRNA(Asn/Gln) amidotransferase subunit B (495 aa).

Belongs to the GatB/GatE family. GatB subfamily. As to quaternary structure, heterotrimer of A, B and C subunits.

It carries out the reaction L-glutamyl-tRNA(Gln) + L-glutamine + ATP + H2O = L-glutaminyl-tRNA(Gln) + L-glutamate + ADP + phosphate + H(+). It catalyses the reaction L-aspartyl-tRNA(Asn) + L-glutamine + ATP + H2O = L-asparaginyl-tRNA(Asn) + L-glutamate + ADP + phosphate + 2 H(+). Allows the formation of correctly charged Asn-tRNA(Asn) or Gln-tRNA(Gln) through the transamidation of misacylated Asp-tRNA(Asn) or Glu-tRNA(Gln) in organisms which lack either or both of asparaginyl-tRNA or glutaminyl-tRNA synthetases. The reaction takes place in the presence of glutamine and ATP through an activated phospho-Asp-tRNA(Asn) or phospho-Glu-tRNA(Gln). The sequence is that of Aspartyl/glutamyl-tRNA(Asn/Gln) amidotransferase subunit B from Crocosphaera subtropica (strain ATCC 51142 / BH68) (Cyanothece sp. (strain ATCC 51142)).